The sequence spans 378 residues: Cytochrome b (378 aa).

Helical transmembrane passes span 33-53 (SGSLLGLCLIIQILTGLFLSM), 77-98 (WLIRNMHANGASFFFICIYFHI), 113-133 (XNVGVILLLLVMMTAFVGYVL), and 178-198 (FFAFLFLLPFIIAAMTMIHLI). Positions 83 and 97 each coordinate heme b. His-196 is a binding site for heme b. A ubiquinone is bound at residue His-201. 4 helical membrane-spanning segments follow: residues 226–246 (FKDLLGFIMLLTILVSLALFS), 288–308 (LGGVLALLFSILVLLLMPILH), 320–340 (LTQFLFWLLIADVAVLTWIGG), and 347–367 (FIIIGQIASALYFTIFLVLFP).

It belongs to the cytochrome b family. As to quaternary structure, the cytochrome bc1 complex contains 3 respiratory subunits (MT-CYB, CYC1 and UQCRFS1), 2 core proteins (UQCRC1 and UQCRC2) and probably 6 low-molecular weight proteins. Heme b is required as a cofactor.

The protein resides in the mitochondrion inner membrane. Its function is as follows. Component of the ubiquinol-cytochrome c reductase complex (complex III or cytochrome b-c1 complex) that is part of the mitochondrial respiratory chain. The b-c1 complex mediates electron transfer from ubiquinol to cytochrome c. Contributes to the generation of a proton gradient across the mitochondrial membrane that is then used for ATP synthesis. The chain is Cytochrome b (mt-cyb) from Nannacara anomala (Goldeneye cichlid).